We begin with the raw amino-acid sequence, 274 residues long: Thiamine kinase (274 aa).

It belongs to the thiamine kinase family.

It catalyses the reaction thiamine + ATP = thiamine phosphate + ADP + H(+). The protein operates within cofactor biosynthesis; thiamine diphosphate biosynthesis; thiamine phosphate from thiamine: step 1/1. Catalyzes the ATP-dependent phosphorylation of thiamine to thiamine phosphate. Is involved in thiamine salvage. This Salmonella heidelberg (strain SL476) protein is Thiamine kinase.